The chain runs to 278 residues: Protein canopy homolog 3 (278 aa).

Residues 1-30 form the signal peptide; it reads MDSMPEPASRCLLLLPLLLLLLLLLPAPEL. The Saposin B-type domain maps to 47 to 271; that stretch reads SKCEVCKYVA…EGIQKASPLT (225 aa). 3 cysteine pairs are disulfide-bonded: C49/C206, C52/C194, and C104/C166. N153 carries N-linked (GlcNAc...) asparagine glycosylation. Positions 153–179 form a coiled coil; it reads NETSAEVADLKKQCDVLVEEFEEVIED. The disordered stretch occupies residues 215-278; it reads KGDTAALGGK…PLTHSPPDEL (64 aa). Residues 233–243 show a composition bias toward low complexity; the sequence is AKAAGGRSSSS.

The protein belongs to the canopy family. Interacts with HSP90B1; this interaction is disrupted in the presence of ATP. Interacts with TLR1, TLR2, TLR4 and TLR9. Strongest interaction with TLR4.

Its subcellular location is the endoplasmic reticulum. Toll-like receptor (TLR)-specific co-chaperone for HSP90B1. Required for proper TLR folding, except that of TLR3, and hence controls TLR exit from the endoplasmic reticulum. Consequently, required for both innate and adaptive immune responses. This is Protein canopy homolog 3 (CNPY3) from Homo sapiens (Human).